Reading from the N-terminus, the 686-residue chain is Chromatin modification-related protein EAF1 (686 aa).

The segment at 71 to 97 is disordered; that stretch reads QMKRRQNDHHNQGPPPKVQKSTVDSLK. The HSA domain maps to 202-280; it reads FKFIRKSKKK…DKSIIRNLPV (79 aa). Residues 354-418 form the Myb-like domain; it reads IPTIWLPEDD…FERYIQLNDK (65 aa). Disordered regions lie at residues 493-517, 544-617, and 657-686; these read RKST…RIPT, ARMV…QQRR, and QQGY…PNNA. A compositionally biased stretch (polar residues) spans 497–506; the sequence is AELQANQNVT. The span at 554-568 shows a compositional bias: pro residues; it reads APAPAPAPPPPPPPK. Over residues 574-588 the composition is skewed to polar residues; sequence TTPNGTPLTNEQIQH. Residues 599–613 show a composition bias toward low complexity; it reads LQQQQQQQQQQQHQQ. Positions 671 to 686 are enriched in polar residues; that stretch reads QKNQTASPMSGSPNNA.

The protein belongs to the EAF1 family. As to quaternary structure, component of the NuA4 histone acetyltransferase complex.

The protein resides in the nucleus. Component of the NuA4 histone acetyltransferase complex which is involved in transcriptional activation of selected genes principally by acetylation of nucleosomal histone H4 and H2A. The NuA4 complex is also involved in DNA repair. This is Chromatin modification-related protein EAF1 (VID21) from Candida albicans (strain SC5314 / ATCC MYA-2876) (Yeast).